The chain runs to 98 residues: Large ribosomal subunit protein uL23 (98 aa).

The protein belongs to the universal ribosomal protein uL23 family. In terms of assembly, part of the 50S ribosomal subunit. Contacts protein L29, and trigger factor when it is bound to the ribosome.

One of the early assembly proteins it binds 23S rRNA. One of the proteins that surrounds the polypeptide exit tunnel on the outside of the ribosome. Forms the main docking site for trigger factor binding to the ribosome. This chain is Large ribosomal subunit protein uL23, found in Rickettsia canadensis (strain McKiel).